Reading from the N-terminus, the 488-residue chain is Inosine-5'-monophosphate dehydrogenase (488 aa).

CBS domains are found at residues 94-150 (IVSE…SKTV) and 154-215 (MTKK…CKDE). NAD(+) is bound by residues aspartate 249, 249–251 (DSS), and 299–301 (GIG). Positions 301 and 303 each coordinate K(+). Serine 304 contributes to the IMP binding site. Cysteine 306 contributes to the K(+) binding site. The Thioimidate intermediate role is filled by cysteine 306. IMP is bound by residues 339–341 (DGG), 362–363 (GS), and 386–390 (YRGMG). The Proton acceptor role is filled by arginine 402. Position 416 (glutamate 416) interacts with IMP. Residues glutamate 470, serine 471, and histidine 472 each contribute to the K(+) site.

This sequence belongs to the IMPDH/GMPR family. In terms of assembly, homotetramer. It depends on K(+) as a cofactor.

It catalyses the reaction IMP + NAD(+) + H2O = XMP + NADH + H(+). The protein operates within purine metabolism; XMP biosynthesis via de novo pathway; XMP from IMP: step 1/1. Its activity is regulated as follows. Mycophenolic acid (MPA) is a non-competitive inhibitor that prevents formation of the closed enzyme conformation by binding to the same site as the amobile flap. In contrast, mizoribine monophosphate (MZP) is a competitive inhibitor that induces the closed conformation. MPA is a potent inhibitor of mammalian IMPDHs but a poor inhibitor of the bacterial enzymes. MZP is a more potent inhibitor of bacterial IMPDH. Catalyzes the conversion of inosine 5'-phosphate (IMP) to xanthosine 5'-phosphate (XMP), the first committed and rate-limiting step in the de novo synthesis of guanine nucleotides, and therefore plays an important role in the regulation of cell growth. This chain is Inosine-5'-monophosphate dehydrogenase, found in Haemophilus influenzae (strain ATCC 51907 / DSM 11121 / KW20 / Rd).